The chain runs to 202 residues: Dual-action ribosomal maturation protein DarP (202 aa).

A compositionally biased stretch (low complexity) spans 1–13; it reads MPPMTRNTRNNPN. Positions 1 to 39 are disordered; sequence MPPMTRNTRNNPNGRFPGAFAPEDEDDLPKSKSQRKRDM.

The protein belongs to the DarP family.

It localises to the cytoplasm. Functionally, member of a network of 50S ribosomal subunit biogenesis factors which assembles along the 30S-50S interface, preventing incorrect 23S rRNA structures from forming. Promotes peptidyl transferase center (PTC) maturation. This is Dual-action ribosomal maturation protein DarP from Cupriavidus metallidurans (strain ATCC 43123 / DSM 2839 / NBRC 102507 / CH34) (Ralstonia metallidurans).